Here is a 280-residue protein sequence, read N- to C-terminus: Lysosome-associated membrane glycoprotein 5 (280 aa).

The signal sequence occupies residues 1–29; it reads MDLRVRTLLGGDRLRILLMFFHVMVQTVA. Residues 30-235 lie on the Extracellular side of the membrane; it reads EQEVENLSGL…PVDEQEQLEE (206 aa). Residues Asn-35, Asn-53, Asn-102, and Asn-127 are each glycosylated (N-linked (GlcNAc...) asparagine). A helical membrane pass occupies residues 236-256; that stretch reads TLPLILGLILGLVIVITLVIY. Residues 257 to 280 are Cytoplasmic-facing; it reads HIHHKMTANQVQIPRDRSQYKHMG.

Belongs to the LAMP family. Post-translationally, glycosylated. In terms of tissue distribution, in brain, strongly expressed in the globus pallidus/ventral pallidum complex, the substantia nigra pars reticulata and the entopeduncular nucleus (at protein level). Expressed in the external plexiform layer of the olfactory bulb (at protein level). May be weakly expressed in neocortex and striatum (at protein level). Highly expressed in brain; not detected in other tissues tested. Detected in the cingulate cortex, cortical plate and caudate putamen. In neocortex, specifically expressed in neurons of layers II/III and V.

It localises to the cytoplasmic vesicle membrane. Its subcellular location is the cell membrane. It is found in the cell projection. The protein localises to the dendrite. The protein resides in the cytoplasmic vesicle. It localises to the secretory vesicle. Its subcellular location is the synaptic vesicle membrane. It is found in the growth cone membrane. The protein localises to the early endosome membrane. The protein resides in the recycling endosome. It localises to the endoplasmic reticulum-Golgi intermediate compartment membrane. Its subcellular location is the endosome membrane. Functionally, plays a role in short-term synaptic plasticity in a subset of GABAergic neurons in the brain. This is Lysosome-associated membrane glycoprotein 5 (Lamp5) from Mus musculus (Mouse).